Consider the following 125-residue polypeptide: Putative iron-sulfur cluster insertion protein ErpA 2 (125 aa).

Iron-sulfur cluster contacts are provided by cysteine 53, cysteine 117, and cysteine 119.

Belongs to the HesB/IscA family. In terms of assembly, homodimer. Iron-sulfur cluster serves as cofactor.

Functionally, required for insertion of 4Fe-4S clusters. In Polaromonas naphthalenivorans (strain CJ2), this protein is Putative iron-sulfur cluster insertion protein ErpA 2.